Here is a 378-residue protein sequence, read N- to C-terminus: Tetraacyldisaccharide 4'-kinase (378 aa).

63–70 is a binding site for ATP; it reads AVGGAGKT.

This sequence belongs to the LpxK family.

The catalysed reaction is a lipid A disaccharide + ATP = a lipid IVA + ADP + H(+). Its pathway is glycolipid biosynthesis; lipid IV(A) biosynthesis; lipid IV(A) from (3R)-3-hydroxytetradecanoyl-[acyl-carrier-protein] and UDP-N-acetyl-alpha-D-glucosamine: step 6/6. Transfers the gamma-phosphate of ATP to the 4'-position of a tetraacyldisaccharide 1-phosphate intermediate (termed DS-1-P) to form tetraacyldisaccharide 1,4'-bis-phosphate (lipid IVA). This Anaeromyxobacter dehalogenans (strain 2CP-C) protein is Tetraacyldisaccharide 4'-kinase.